We begin with the raw amino-acid sequence, 261 residues long: NAD kinase (261 aa).

Aspartate 54 functions as the Proton acceptor in the catalytic mechanism. NAD(+) contacts are provided by residues 54–55 (DG), 123–124 (ND), arginine 150, aspartate 152, and 163–168 (TAYSLS).

The protein belongs to the NAD kinase family. The cofactor is a divalent metal cation.

The protein localises to the cytoplasm. The catalysed reaction is NAD(+) + ATP = ADP + NADP(+) + H(+). Involved in the regulation of the intracellular balance of NAD and NADP, and is a key enzyme in the biosynthesis of NADP. Catalyzes specifically the phosphorylation on 2'-hydroxyl of the adenosine moiety of NAD to yield NADP. The chain is NAD kinase from Caldicellulosiruptor bescii (strain ATCC BAA-1888 / DSM 6725 / KCTC 15123 / Z-1320) (Anaerocellum thermophilum).